The following is a 761-amino-acid chain: MAEFGELEAQDGVRMPWNIIPVATKKEQSIDSEVPVSAIYTPLKPLRSQSLLLPYSPLRCRTCRSVLNPYSVVDFSACNWGCPFCFNRNPFPLNYSSVADNNLPPELFPHSTTVEYLCDSFSSPSPPVFLFVVDTCLISEELDFLKSSLFQALDLLPDTSILGLITFDSLVRVYELGFPHCTKSYFFHGNKDCTKDQLLDQLSFFVKNPKPSSGVIAGARDGLSSDDIARFLLPASDCHFTLHSVLEELGNSPWPVAADHRPARCTGVALRIAASLLGACFPGSAARIMAFIGGPSTQGPGAIVSRELSDPIRSHKDIDKDSAMYYHKAVEFYEMLAKQLVHQGHVLDVFASSVDQVGIAELKVAVEQTGGFVVLAESFGHSVFRDSLKRVCQSGENDLGLSSCGIFEINCSKDIKVQGIIGPCASLEKKGPLCSDTAIGQGHTSAWKMCGLDNNTSICLVFEIAKIDTADVVLQSQSNQFYFQFLTYYQHSNGQTRLRVTTLSRRWVMGTESLQELSNGFDQEAAAVVMARLISSKMETQPEFNPQRWVDKALINLCTWFGDYQKGNPSSFSLSSQLSIFPQFVFHLRRSQFVQVFNNSPDETAYFRMILYRENVSNSVVMIQPSLISFSFHSPPEPILLDVASIAADRILLLDSYFTLVIFHGSTIAQWRKAGYHNQPEHQAFGHLLQSPRDYADTIMSERFPTPRLVICDQYGSQARFLLAKLNPCDGDAHFSGQSNVFTDDVSLSVFLDHLRRLIVH.

Zn(2+) contacts are provided by C60, C63, C82, and C85. The zinc finger-like stretch occupies residues 60–85 (CRTCRSVLNPYSVVDFSACNWGCPFC).

It belongs to the SEC23/SEC24 family. SEC24 subfamily. In terms of assembly, component of the coat protein complex II (COPII), composed of at least five proteins: the Sec23/24 complex, the Sec13/31 complex and Sar1.

Its subcellular location is the cytoplasmic vesicle. The protein localises to the COPII-coated vesicle membrane. The protein resides in the endoplasmic reticulum membrane. It is found in the membrane. Its function is as follows. Component of the coat protein complex II (COPII) which promotes the formation of transport vesicles from the endoplasmic reticulum (ER). The coat has two main functions, the physical deformation of the endoplasmic reticulum membrane into vesicles and the selection of cargo molecules. In Arabidopsis thaliana (Mouse-ear cress), this protein is Protein transport protein SEC23 C.